Here is a 96-residue protein sequence, read N- to C-terminus: Protein Vpr (96 aa).

A homooligomerization region spans residues 1-42 (MEQAPEDQGPQREPYNEWTIEILEELKREAVRHFPRPWLHDL). Phosphoserine; by host is present on residues Ser-79, Ser-94, and Ser-96.

The protein belongs to the HIV-1 VPR protein family. As to quaternary structure, homooligomer, may form homodimer. Interacts with p6-gag region of the Pr55 Gag precursor protein through a (Leu-X-X)4 motif near the C-terminus of the P6gag protein. Interacts with host UNG. May interact with host RAD23A/HHR23A. Interacts with host VPRBP/DCAF1, leading to hijack the CUL4A-RBX1-DDB1-DCAF1/VPRBP complex, mediating ubiquitination of host proteins such as TERT and ZGPAT and arrest of the cell cycle in G2 phase. In terms of processing, phosphorylated on several residues by host. These phosphorylations regulate VPR activity for the nuclear import of the HIV-1 pre-integration complex.

The protein resides in the virion. It localises to the host nucleus. The protein localises to the host extracellular space. In terms of biological role, during virus replication, may deplete host UNG protein, and incude G2-M cell cycle arrest. Acts by targeting specific host proteins for degradation by the 26S proteasome, through association with the cellular CUL4A-DDB1 E3 ligase complex by direct interaction with host VPRPB/DCAF-1. Cell cycle arrest reportedly occurs within hours of infection and is not blocked by antiviral agents, suggesting that it is initiated by the VPR carried into the virion. Additionally, VPR induces apoptosis in a cell cycle dependent manner suggesting that these two effects are mechanistically linked. Detected in the serum and cerebrospinal fluid of AIDS patient, VPR may also induce cell death to bystander cells. Functionally, during virus entry, plays a role in the transport of the viral pre-integration (PIC) complex to the host nucleus. This function is crucial for viral infection of non-dividing macrophages. May act directly at the nuclear pore complex, by binding nucleoporins phenylalanine-glycine (FG)-repeat regions. The polypeptide is Protein Vpr (Human immunodeficiency virus type 1 group M subtype K (isolate 97ZR-EQTB11) (HIV-1)).